We begin with the raw amino-acid sequence, 241 residues long: Oil body-associated protein 1B (241 aa).

Over residues 1-12 (MEKAVHSSTTSG) the composition is skewed to polar residues. The disordered stretch occupies residues 1 to 22 (MEKAVHSSTTSGPAVPGETTKT).

This sequence belongs to the OBAP family.

In Arabidopsis thaliana (Mouse-ear cress), this protein is Oil body-associated protein 1B.